We begin with the raw amino-acid sequence, 694 residues long: Phosphatase and actin regulator 4 (694 aa).

2 disordered regions span residues 1–354 (MEDP…SPLV) and 375–405 (QDIS…PSRL). Residues 45–54 (KPWKWRKKKS) show a composition bias toward basic residues. Over residues 55–84 (SDKFKETSEVLERKISMRKPREELVKRGVL) the composition is skewed to basic and acidic residues. An RPEL 1 repeat occupies 63–88 (EVLERKISMRKPREELVKRGVLLEDP). Ser116, Ser118, Ser129, and Ser145 each carry phosphoserine. 2 stretches are compositionally biased toward low complexity: residues 184–209 (AGST…TAAT) and 231–249 (TLPA…TAPA). Residues 250-259 (KQPPIPPPKP) show a composition bias toward pro residues. Ser264, Ser285, Ser335, and Ser337 each carry phosphoserine. Residues 329–352 (LIIPPSSPSPPLPTHIPPEPPRSP) are compositionally biased toward pro residues. The span at 381–392 (EDQKTEVPKKIQ) shows a compositional bias: basic and acidic residues. Ser420 carries the phosphoserine modification. Residue Thr425 is modified to Phosphothreonine. Phosphoserine occurs at positions 436, 446, 457, 503, 505, 549, and 582. The tract at residues 467-562 (VPDDEEEEQT…TNLNSWPRKS (96 aa)) is disordered. The span at 546 to 559 (SRPSEPETNLNSWP) shows a compositional bias: polar residues. RPEL repeat units follow at residues 575–600 (NTLI…QPKN) and 613–638 (RRLT…RFNE). The interval 589–608 (ELEQRNILQPKNEADRQAEK) is disordered. Residue Ser620 is modified to Phosphoserine.

It belongs to the phosphatase and actin regulator family. As to quaternary structure, binds PPP1CA and actin.

It localises to the cytoplasm. The protein resides in the cell projection. It is found in the lamellipodium. Regulator of protein phosphatase 1 (PP1) required for neural tube and optic fissure closure, and enteric neural crest cell (ENCCs) migration during development. Acts as an activator of PP1 by interacting with PPP1CA and preventing phosphorylation of PPP1CA at 'Thr-320'. During neural tube closure, localizes to the ventral neural tube and activates PP1, leading to down-regulate cell proliferation within cranial neural tissue and the neural retina. Also acts as a regulator of migration of enteric neural crest cells (ENCCs) by activating PP1, leading to dephosphorylation and subsequent activation of cofilin (COF1 or COF2) and repression of the integrin signaling through the RHO/ROCK pathway. This Mus musculus (Mouse) protein is Phosphatase and actin regulator 4 (Phactr4).